The following is a 120-amino-acid chain: NAD(P)H-quinone oxidoreductase subunit 3, chloroplastic (120 aa).

3 helical membrane-spanning segments follow: residues 2-22 (FLLY…VIPI), 64-84 (MFAL…PWAL), and 88-108 (ILGV…VLGL).

The protein belongs to the complex I subunit 3 family. NDH is composed of at least 16 different subunits, 5 of which are encoded in the nucleus.

Its subcellular location is the plastid. It localises to the chloroplast thylakoid membrane. The catalysed reaction is a plastoquinone + NADH + (n+1) H(+)(in) = a plastoquinol + NAD(+) + n H(+)(out). The enzyme catalyses a plastoquinone + NADPH + (n+1) H(+)(in) = a plastoquinol + NADP(+) + n H(+)(out). Its function is as follows. NDH shuttles electrons from NAD(P)H:plastoquinone, via FMN and iron-sulfur (Fe-S) centers, to quinones in the photosynthetic chain and possibly in a chloroplast respiratory chain. The immediate electron acceptor for the enzyme in this species is believed to be plastoquinone. Couples the redox reaction to proton translocation, and thus conserves the redox energy in a proton gradient. The protein is NAD(P)H-quinone oxidoreductase subunit 3, chloroplastic of Oenothera argillicola (Appalachian evening primrose).